Reading from the N-terminus, the 1180-residue chain is Neurexin like receptor 1 (1180 aa).

Positions 1–20 (MSGLCLVLLLSIFAVSQSSG) are cleaved as a signal peptide. The Extracellular segment spans residues 21-1108 (ECSDVSFSSV…SQNKQDLVSK (1088 aa)). Positions 124 to 290 (PITAFDDSSY…LSPNEVHNQC (167 aa)) constitute a Laminin G-like 1 domain. An N-linked (GlcNAc...) asparagine glycan is attached at asparagine 229. Cysteine 267 and cysteine 290 form a disulfide bridge. Asparagine 302, asparagine 336, asparagine 355, and asparagine 436 each carry an N-linked (GlcNAc...) asparagine glycan. An EGF-like 1 domain is found at 444–481 (FQEKCLPNPCENGGGCVQSALDDYVCNCKEGYKGKNCH). Disulfide bonds link cysteine 448/cysteine 459, cysteine 453/cysteine 469, and cysteine 471/cysteine 480. N-linked (GlcNAc...) asparagine glycosylation is found at asparagine 522 and asparagine 636. The region spanning 695 to 863 (TFDPVTFSNR…GVAIGDDGYC (169 aa)) is the Laminin G-like 2 domain. Positions 859–896 (DDGYCRPDLCQNGGQCVDKYDGYVCDCSMTPFGGSDCT) constitute an EGF-like 2 domain. Disulfide bonds link cysteine 863–cysteine 874, cysteine 868–cysteine 883, and cysteine 885–cysteine 895. 6 N-linked (GlcNAc...) asparagine glycosylation sites follow: asparagine 933, asparagine 949, asparagine 978, asparagine 997, asparagine 1011, and asparagine 1052. The helical transmembrane segment at 1109–1129 (AIIGGGILALSLFILCMSSLI) threads the bilayer. Over 1130–1180 (CYMRSRPEGVYKTNETGENCSPSRSEEPLVHNTTSNNNNNPTYASNKEYFC) the chain is Cytoplasmic. A compositionally biased stretch (polar residues) spans 1142–1152 (TNETGENCSPS). A disordered region spans residues 1142-1180 (TNETGENCSPSRSEEPLVHNTTSNNNNNPTYASNKEYFC). The span at 1161 to 1171 (NTTSNNNNNPT) shows a compositional bias: low complexity.

This sequence belongs to the neurexin family. Interacts (via the intracellular domain) with F-actin; the interaction is required for anchoring F-actin at the membrane for gap junction formation. As to expression, highly expressed in pharyngeal g1 and g2 gland cells, pharyngeal muscle cells and the unilateral GABAergic RIS interneuron (at protein level). Expressed in pm5 pharyngeal muscle cells and the nerve ring.

The protein localises to the cell membrane. It localises to the cell junction. It is found in the gap junction. In terms of biological role, required for gap junction formation, playing a role in anchoring the cytoskeletal component F-actin to the membrane of adjacent cells and thus facilitating the formation of gap junction channels in embryonic cells, muscle cells and neuronal cells. Plays a role in maintaining gap junction activity to promote pharyngeal muscle contraction. In Caenorhabditis elegans, this protein is Neurexin like receptor 1.